Consider the following 128-residue polypeptide: Regulator of ribonuclease activity B (128 aa).

Belongs to the RraB family. In terms of assembly, interacts with the C-terminal region of Rne.

The protein localises to the cytoplasm. Its function is as follows. Globally modulates RNA abundance by binding to RNase E (Rne) and regulating its endonucleolytic activity. Can modulate Rne action in a substrate-dependent manner by altering the composition of the degradosome. This is Regulator of ribonuclease activity B from Idiomarina loihiensis (strain ATCC BAA-735 / DSM 15497 / L2-TR).